Reading from the N-terminus, the 368-residue chain is Alanine racemase (368 aa).

Lys-40 (proton acceptor; specific for D-alanine) is an active-site residue. N6-(pyridoxal phosphate)lysine is present on Lys-40. Arg-134 contacts substrate. The active-site Proton acceptor; specific for L-alanine is Tyr-263. Met-310 contacts substrate.

Belongs to the alanine racemase family. It depends on pyridoxal 5'-phosphate as a cofactor.

It carries out the reaction L-alanine = D-alanine. Its pathway is amino-acid biosynthesis; D-alanine biosynthesis; D-alanine from L-alanine: step 1/1. Catalyzes the interconversion of L-alanine and D-alanine. May also act on other amino acids. The sequence is that of Alanine racemase (alr) from Listeria monocytogenes serovar 1/2a (strain ATCC BAA-679 / EGD-e).